The following is a 173-amino-acid chain: Putative pre-16S rRNA nuclease (173 aa).

Belongs to the YqgF nuclease family.

It localises to the cytoplasm. Could be a nuclease involved in processing of the 5'-end of pre-16S rRNA. In Rhodopirellula baltica (strain DSM 10527 / NCIMB 13988 / SH1), this protein is Putative pre-16S rRNA nuclease.